The sequence spans 674 residues: Sodium/hydrogen exchanger 1 (674 aa).

Positions 1–24 (MKLNKSYILIVVLLLSLFYSSVSS) are cleaved as a signal peptide. The tract at residues 31-65 (KSNNHYNSDNSNNDNKNININNNNDGDGDDDDDNN) is disordered. The span at 37–55 (NSDNSNNDNKNININNNND) shows a compositional bias: low complexity. Helical transmembrane passes span 120 to 140 (TIIF…YFII), 144 to 164 (IPFV…GIVF), 175 to 195 (VVSF…IFET), 213 to 233 (MFAV…IYIV), 275 to 297 (LYIL…YSVV), 314 to 334 (VVAI…SLIL), 336 to 356 (WINI…FSYM), 359 to 379 (VLAG…GITL), 401 to 421 (TAAF…LTAH), 432 to 452 (WSIL…CFLL), 460 to 480 (IPWV…FAFS), and 499 to 519 (NTLL…YPLL). The interval 591 to 674 (HELDSNPLRF…NKNNDTLPLI (84 aa)) is disordered. Residues 601 to 618 (DDDEEDDDDEDLDFDSDL) are compositionally biased toward acidic residues. Over residues 627–657 (DSIHQSDNNNNDNGNNNNNNNNIIINNNSQH) the composition is skewed to low complexity. Residues 662-674 (GSNNKNNDTLPLI) show a composition bias toward polar residues.

It belongs to the monovalent cation:proton antiporter 1 (CPA1) transporter (TC 2.A.36) family.

It localises to the membrane. With respect to regulation, LY294002, an inhibitor of the catalytic subunit of PI3-kinase, blocks NHE1-dependent (but not NHE1-independent) increase in intracellular pH in response to cAMP. Regulation of intracellular pH homeostasis in response to cAMP, which is essential for chemotaxis. Necessary for F-actin localization and the kinetics of actin polymerization during chemotaxis and cell polarity but not for directional sensing. In Dictyostelium discoideum (Social amoeba), this protein is Sodium/hydrogen exchanger 1 (nhe1).